Consider the following 189-residue polypeptide: Hypoxanthine/guanine phosphoribosyltransferase (189 aa).

This sequence belongs to the purine/pyrimidine phosphoribosyltransferase family. Archaeal HPRT subfamily. In terms of assembly, homodimer.

The protein localises to the cytoplasm. The catalysed reaction is IMP + diphosphate = hypoxanthine + 5-phospho-alpha-D-ribose 1-diphosphate. It carries out the reaction GMP + diphosphate = guanine + 5-phospho-alpha-D-ribose 1-diphosphate. It participates in purine metabolism; IMP biosynthesis via salvage pathway; IMP from hypoxanthine: step 1/1. In terms of biological role, catalyzes a salvage reaction resulting in the formation of IMP that is energically less costly than de novo synthesis. In Methanothermus fervidus (strain ATCC 43054 / DSM 2088 / JCM 10308 / V24 S), this protein is Hypoxanthine/guanine phosphoribosyltransferase.